The chain runs to 659 residues: UvrABC system protein B (659 aa).

One can recognise a Helicase ATP-binding domain in the interval 25 to 414 (EGVRRGAREQ…PSLVVEQIVR (390 aa)). Residue 38-45 (GATGTGKT) coordinates ATP. The short motif at 91-114 (YYDYYQPEAYIPTTDTYIEKDALI) is the Beta-hairpin element. A Helicase C-terminal domain is found at 431–597 (QIDDLYAEIR…TIVKPVRDVI (167 aa)). The UVR domain maps to 620–655 (PKVVAKLRKEMMQAAKDLDFERAAEIRDIIFELEKK).

Belongs to the UvrB family. In terms of assembly, forms a heterotetramer with UvrA during the search for lesions. Interacts with UvrC in an incision complex.

It is found in the cytoplasm. Its function is as follows. The UvrABC repair system catalyzes the recognition and processing of DNA lesions. A damage recognition complex composed of 2 UvrA and 2 UvrB subunits scans DNA for abnormalities. Upon binding of the UvrA(2)B(2) complex to a putative damaged site, the DNA wraps around one UvrB monomer. DNA wrap is dependent on ATP binding by UvrB and probably causes local melting of the DNA helix, facilitating insertion of UvrB beta-hairpin between the DNA strands. Then UvrB probes one DNA strand for the presence of a lesion. If a lesion is found the UvrA subunits dissociate and the UvrB-DNA preincision complex is formed. This complex is subsequently bound by UvrC and the second UvrB is released. If no lesion is found, the DNA wraps around the other UvrB subunit that will check the other stand for damage. In Symbiobacterium thermophilum (strain DSM 24528 / JCM 14929 / IAM 14863 / T), this protein is UvrABC system protein B.